A 218-amino-acid polypeptide reads, in one-letter code: Peptide deformylase (218 aa).

The Fe cation site is built by C130 and H172. Residue E173 is part of the active site. H176 lines the Fe cation pocket.

It belongs to the polypeptide deformylase family. It depends on Fe(2+) as a cofactor.

It carries out the reaction N-terminal N-formyl-L-methionyl-[peptide] + H2O = N-terminal L-methionyl-[peptide] + formate. Functionally, removes the formyl group from the N-terminal Met of newly synthesized proteins. Requires at least a dipeptide for an efficient rate of reaction. N-terminal L-methionine is a prerequisite for activity but the enzyme has broad specificity at other positions. The chain is Peptide deformylase from Bifidobacterium adolescentis (strain ATCC 15703 / DSM 20083 / NCTC 11814 / E194a).